A 230-amino-acid polypeptide reads, in one-letter code: Leucyl/phenylalanyl-tRNA--protein transferase (230 aa).

This sequence belongs to the L/F-transferase family.

Its subcellular location is the cytoplasm. It carries out the reaction N-terminal L-lysyl-[protein] + L-leucyl-tRNA(Leu) = N-terminal L-leucyl-L-lysyl-[protein] + tRNA(Leu) + H(+). It catalyses the reaction N-terminal L-arginyl-[protein] + L-leucyl-tRNA(Leu) = N-terminal L-leucyl-L-arginyl-[protein] + tRNA(Leu) + H(+). The enzyme catalyses L-phenylalanyl-tRNA(Phe) + an N-terminal L-alpha-aminoacyl-[protein] = an N-terminal L-phenylalanyl-L-alpha-aminoacyl-[protein] + tRNA(Phe). In terms of biological role, functions in the N-end rule pathway of protein degradation where it conjugates Leu, Phe and, less efficiently, Met from aminoacyl-tRNAs to the N-termini of proteins containing an N-terminal arginine or lysine. In Rhodopseudomonas palustris (strain BisB18), this protein is Leucyl/phenylalanyl-tRNA--protein transferase.